The primary structure comprises 274 residues: MNKKSPDTEKVSNYDYLEKMNTFELLSNINKEDHTIAENVKKQIPSIEKLVDEIIPRIDSGGRLFYIGAGTSGRLGVLDASECPPTFGVSPGIVIGLIAGGDTALRNAVENAEDDTNQAWKDLQEYDISEKDVLVGIAASGTTPYVIGGIKDARNNGIITGCITCSSGSPLAEASEYPIEVVTGPEFVTGSTRMKAGTAQKLVLNMISTSVMIKLGRVKGNKMVDMQLSNDKLVGRGIRMIMEDLNIEKEQAEKLLLEHKSVRKVLDAHKNERN.

The SIS domain maps to 54–217 (IIPRIDSGGR…STSVMIKLGR (164 aa)). Catalysis depends on Glu82, which acts as the Proton donor. Glu113 is an active-site residue.

This sequence belongs to the GCKR-like family. MurNAc-6-P etherase subfamily. As to quaternary structure, homodimer.

It carries out the reaction N-acetyl-D-muramate 6-phosphate + H2O = N-acetyl-D-glucosamine 6-phosphate + (R)-lactate. The protein operates within amino-sugar metabolism; N-acetylmuramate degradation. Specifically catalyzes the cleavage of the D-lactyl ether substituent of MurNAc 6-phosphate, producing GlcNAc 6-phosphate and D-lactate. The chain is N-acetylmuramic acid 6-phosphate etherase from Christiangramia forsetii (strain DSM 17595 / CGMCC 1.15422 / KT0803) (Gramella forsetii).